Consider the following 250-residue polypeptide: Small ribosomal subunit protein uS2 (250 aa).

It belongs to the universal ribosomal protein uS2 family.

The sequence is that of Small ribosomal subunit protein uS2 from Paraburkholderia phymatum (strain DSM 17167 / CIP 108236 / LMG 21445 / STM815) (Burkholderia phymatum).